The primary structure comprises 365 residues: 3-isopropylmalate dehydrogenase (365 aa).

78–91 is a binding site for NAD(+); that stretch reads GYKWDSLPRSQRPE. Residues R98, R108, R136, and D226 each coordinate substrate. Positions 226, 250, and 254 each coordinate Mg(2+). NAD(+) is bound at residue 284–296; that stretch reads GSAPDIAGQDKAN.

The protein belongs to the isocitrate and isopropylmalate dehydrogenases family. LeuB type 1 subfamily. As to quaternary structure, homodimer. Mg(2+) serves as cofactor. Mn(2+) is required as a cofactor.

The protein resides in the cytoplasm. The enzyme catalyses (2R,3S)-3-isopropylmalate + NAD(+) = 4-methyl-2-oxopentanoate + CO2 + NADH. The protein operates within amino-acid biosynthesis; L-leucine biosynthesis; L-leucine from 3-methyl-2-oxobutanoate: step 3/4. In terms of biological role, catalyzes the oxidation of 3-carboxy-2-hydroxy-4-methylpentanoate (3-isopropylmalate) to 3-carboxy-4-methyl-2-oxopentanoate. The product decarboxylates to 4-methyl-2 oxopentanoate. The chain is 3-isopropylmalate dehydrogenase from Synechococcus elongatus (strain ATCC 33912 / PCC 7942 / FACHB-805) (Anacystis nidulans R2).